We begin with the raw amino-acid sequence, 324 residues long: Cuticle collagen lon-3 (324 aa).

The signal sequence occupies residues methionine 1–serine 30. The segment at valine 119–tyrosine 324 is disordered. Triple-helical region regions lie at residues glycine 129–aspartate 152, glycine 170–aspartate 229, and glycine 235–proline 294. Low complexity-rich tracts occupy residues proline 136 to glutamine 151, proline 168 to proline 181, proline 210 to serine 223, glycine 235 to glutamine 246, and glutamate 261 to proline 273. Over residues lysine 296–asparagine 311 the composition is skewed to basic and acidic residues. Residues arginine 314 to tyrosine 324 show a composition bias toward basic residues.

The protein belongs to the cuticular collagen family. Collagen polypeptide chains are complexed within the cuticle by disulfide bonds and other types of covalent cross-links.

In terms of biological role, nematode cuticles are composed largely of collagen-like proteins. The cuticle functions both as an exoskeleton and as a barrier to protect the worm from its environment. Dose-dependent regulator of body length and shape. This chain is Cuticle collagen lon-3 (lon-3), found in Caenorhabditis elegans.